The primary structure comprises 87 residues: Translation initiation factor IF-1 (87 aa).

Residues 16–87 form the S1-like domain; sequence LSKEDVIEME…TKGRISYRHK (72 aa).

The protein belongs to the IF-1 family. In terms of assembly, component of the 30S ribosomal translation pre-initiation complex which assembles on the 30S ribosome in the order IF-2 and IF-3, IF-1 and N-formylmethionyl-tRNA(fMet); mRNA recruitment can occur at any time during PIC assembly.

It localises to the cytoplasm. Functionally, one of the essential components for the initiation of protein synthesis. Stabilizes the binding of IF-2 and IF-3 on the 30S subunit to which N-formylmethionyl-tRNA(fMet) subsequently binds. Helps modulate mRNA selection, yielding the 30S pre-initiation complex (PIC). Upon addition of the 50S ribosomal subunit IF-1, IF-2 and IF-3 are released leaving the mature 70S translation initiation complex. The protein is Translation initiation factor IF-1 of Magnetococcus marinus (strain ATCC BAA-1437 / JCM 17883 / MC-1).